The primary structure comprises 83 residues: Short neurotoxin 1 (83 aa).

Residues 1 to 21 form the signal peptide; it reads MKTLLLTLVVVTIVCLDLGYT. 4 disulfides stabilise this stretch: Cys24–Cys45, Cys38–Cys62, Cys64–Cys75, and Cys76–Cys81.

The protein belongs to the three-finger toxin family. Short-chain subfamily. Type I alpha-neurotoxin sub-subfamily. In terms of tissue distribution, expressed by the venom gland.

Its subcellular location is the secreted. Binds to muscle nicotinic acetylcholine receptor (nAChR) and inhibit acetylcholine from binding to the receptor, thereby impairing neuromuscular transmission. This is Short neurotoxin 1 from Oxyuranus scutellatus scutellatus (Australian taipan).